Consider the following 127-residue polypeptide: Large ribosomal subunit protein bL19 (127 aa).

This sequence belongs to the bacterial ribosomal protein bL19 family.

In terms of biological role, this protein is located at the 30S-50S ribosomal subunit interface and may play a role in the structure and function of the aminoacyl-tRNA binding site. This Trichodesmium erythraeum (strain IMS101) protein is Large ribosomal subunit protein bL19.